A 232-amino-acid polypeptide reads, in one-letter code: Large ribosomal subunit protein uL1 (232 aa).

This sequence belongs to the universal ribosomal protein uL1 family. As to quaternary structure, part of the 50S ribosomal subunit.

Functionally, binds directly to 23S rRNA. The L1 stalk is quite mobile in the ribosome, and is involved in E site tRNA release. In terms of biological role, protein L1 is also a translational repressor protein, it controls the translation of the L11 operon by binding to its mRNA. The sequence is that of Large ribosomal subunit protein uL1 from Xanthomonas oryzae pv. oryzae (strain MAFF 311018).